The primary structure comprises 403 residues: Octaketide synthase 1 (403 aa).

Cys174 is a catalytic residue. CoA-binding positions include Ser281 and 318–321; that span reads GGRA.

The protein belongs to the thiolase-like superfamily. Chalcone/stilbene synthases family. In terms of assembly, homodimer.

It participates in secondary metabolite biosynthesis; flavonoid biosynthesis. Catalyzes the iterative condensations of 8 molecules of malonyl-CoA to produce aromatic octaketides, SEK4 and SEK4b, the products of the minimal polyketide synthase for the benzoisochromanequinone actinorhodin. May be involved in the biosynthesis of the octaketide barbaloin. The polypeptide is Octaketide synthase 1 (Aloe arborescens (Kidachi aloe)).